Consider the following 180-residue polypeptide: Vacuolar ATPase assembly protein VMA22 (180 aa).

Residues 16 to 37 (QLLGDLEELEGKRTVLNARVEE) adopt a coiled-coil conformation. Residues 92–101 (EEVGPREAGL) are compositionally biased toward basic and acidic residues. The disordered stretch occupies residues 92–122 (EEVGPREAGLRRRKGPTKTPEPESSEAPQDP). A coiled-coil region spans residues 153 to 176 (SLQNRIDWGRSQLRGLQEKLKQLE).

In terms of assembly, accessory component of the multisubunit proton-transporting vacuolar (V)-ATPase protein pump. As to expression, expressed throughout the brain.

It is found in the endosome. The protein resides in the lysosome. The protein localises to the endoplasmic reticulum-Golgi intermediate compartment. It localises to the cytoplasmic vesicle. Its subcellular location is the COPI-coated vesicle. It is found in the endoplasmic reticulum. In terms of biological role, accessory component of the proton-transporting vacuolar (V)-ATPase protein pump involved in intracellular iron homeostasis. In aerobic conditions, required for intracellular iron homeostasis, thus triggering the activity of Fe(2+) prolyl hydroxylase (PHD) enzymes, and leading to HIF1A hydroxylation and subsequent proteasomal degradation. Necessary for endolysosomal acidification and lysosomal degradation. May be involved in Golgi homeostasis. This Homo sapiens (Human) protein is Vacuolar ATPase assembly protein VMA22.